The following is a 509-amino-acid chain: ATP synthase subunit alpha (509 aa).

Position 169–176 (G169–T176) interacts with ATP.

Belongs to the ATPase alpha/beta chains family. As to quaternary structure, F-type ATPases have 2 components, CF(1) - the catalytic core - and CF(0) - the membrane proton channel. CF(1) has five subunits: alpha(3), beta(3), gamma(1), delta(1), epsilon(1). CF(0) has three main subunits: a(1), b(2) and c(9-12). The alpha and beta chains form an alternating ring which encloses part of the gamma chain. CF(1) is attached to CF(0) by a central stalk formed by the gamma and epsilon chains, while a peripheral stalk is formed by the delta and b chains.

The protein localises to the cell inner membrane. The enzyme catalyses ATP + H2O + 4 H(+)(in) = ADP + phosphate + 5 H(+)(out). Produces ATP from ADP in the presence of a proton gradient across the membrane. The alpha chain is a regulatory subunit. The protein is ATP synthase subunit alpha of Sinorhizobium medicae (strain WSM419) (Ensifer medicae).